We begin with the raw amino-acid sequence, 1228 residues long: AT-rich interactive domain-containing protein 4B (1228 aa).

Disordered regions lie at residues 123–167 (LPLT…DDRK) and 266–307 (KTEL…PFPE). Phosphoserine occurs at positions 276, 295, and 296. Residues 277–305 (EAEEEEEEEDDEKEKEDNSSEEEEEIEPF) show a composition bias toward acidic residues. Residues 306 to 398 (PEERENFLQQ…YLYGFEEYCR (93 aa)) form the ARID domain. Glycyl lysine isopeptide (Lys-Gly) (interchain with G-Cter in SUMO2) cross-links involve residues Lys-428 and Lys-461. Basic and acidic residues predominate over residues 437–464 (EVNVEDSKNMIPKEETPAEDESERKENI). Disordered regions lie at residues 437–466 (EVNV…NIKP), 479–525 (PAQS…EQAR), 539–606 (RPAD…SDTG), 620–802 (LQAS…EEKR), 825–1129 (LNNS…RLPK), and 1168–1204 (SEVA…SITA). The residue at position 482 (Ser-482) is a Phosphoserine. Residues 483 to 511 (DQEKEANITKLEEKESLEDKDGATARAEE) are compositionally biased toward basic and acidic residues. The span at 546–555 (PKIKHRKKIK) shows a compositional bias: basic residues. Basic and acidic residues predominate over residues 556–569 (NKLDKEKDRDEKYS). Phosphoserine is present on residues Ser-579, Ser-581, and Ser-588. Basic and acidic residues predominate over residues 596–606 (DLADAKNSDTG). Ser-630 bears the Phosphoserine mark. Composition is skewed to basic and acidic residues over residues 635–667 (ERCA…KEEL) and 691–700 (SPERLRKDVE). Lys-664 participates in a covalent cross-link: Glycyl lysine isopeptide (Lys-Gly) (interchain with G-Cter in SUMO2). 2 positions are modified to phosphoserine: Ser-691 and Ser-703. Positions 701–713 (AISEDTDFEEEDE) are enriched in acidic residues. The residue at position 706 (Thr-706) is a Phosphothreonine. The span at 721–730 (VKKDTTDKAL) shows a compositional bias: basic and acidic residues. The span at 744 to 753 (IQTNCLQSGS) shows a compositional bias: polar residues. 3 stretches are compositionally biased toward basic and acidic residues: residues 755–765 (GKKEDRTKSKE), 825–843 (LNNS…RKDV), and 911–926 (KPVE…RKTE). Over residues 927–937 (FPSSGSNSVLN) the composition is skewed to polar residues. Position 930 is a phosphoserine (Ser-930). Thr-942 carries the post-translational modification Phosphothreonine. Low complexity predominate over residues 944–965 (ESPSSVTVTETSQQQSSVTVSV). The residue at position 945 (Ser-945) is a Phosphoserine. Positions 972 to 981 (EEVRSIKSET) are enriched in basic and acidic residues. Residues 1003–1017 (SSPAGFNASVSSSSS) show a composition bias toward low complexity. Over residues 1046-1064 (KKQKRSHKATVVNNKKKGK) the composition is skewed to basic residues. Thr-1066 is modified (phosphothreonine). 4 positions are modified to phosphoserine: Ser-1068, Ser-1069, Ser-1071, and Ser-1075. The segment covering 1112–1124 (KNGDKDPDLKEPS) has biased composition (basic and acidic residues). The stretch at 1141 to 1186 (ENMTSAERISILQEKLQEIRKHYLSLKSEVASIDRRRKRLKKKERE) forms a coiled coil. Over residues 1188 to 1204 (AATSSSSSSPSSSSITA) the composition is skewed to low complexity.

As to quaternary structure, component of a Sin3A corepressor complex consisting of SIN3A, SAP130, SUDS3/SAP45, SAP180, HDAC1 and HDAC2. Interacts with ARID4A. Interacts with AR.

It is found in the nucleus. Acts as a transcriptional repressor. May function in the assembly and/or enzymatic activity of the Sin3A corepressor complex or in mediating interactions between the complex and other regulatory complexes. Plays a role in the regulation of epigenetic modifications at the PWS/AS imprinting center near the SNRPN promoter, where it might function as part of a complex with RB1 and ARID4A. Involved in spermatogenesis, together with ARID4A, where it functions as a transcriptional coactivator for AR (androgen receptor) and enhances expression of genes required for sperm maturation. Regulates expression of the tight junction protein CLDN3 in the testis, which is important for integrity of the blood-testis barrier. Plays a role in myeloid homeostasis where it regulates the histone methylation state of bone marrow cells and expression of various genes involved in hematopoiesis. May function as a leukemia suppressor. The sequence is that of AT-rich interactive domain-containing protein 4B (Arid4b) from Rattus norvegicus (Rat).